The chain runs to 513 residues: Glutamyl-tRNA(Gln) amidotransferase subunit A (513 aa).

Residues Lys85 and Ser160 each act as charge relay system in the active site. Catalysis depends on Ser184, which acts as the Acyl-ester intermediate.

Belongs to the amidase family. GatA subfamily. Heterotrimer of A, B and C subunits.

The enzyme catalyses L-glutamyl-tRNA(Gln) + L-glutamine + ATP + H2O = L-glutaminyl-tRNA(Gln) + L-glutamate + ADP + phosphate + H(+). In terms of biological role, allows the formation of correctly charged Gln-tRNA(Gln) through the transamidation of misacylated Glu-tRNA(Gln) in organisms which lack glutaminyl-tRNA synthetase. The reaction takes place in the presence of glutamine and ATP through an activated gamma-phospho-Glu-tRNA(Gln). The protein is Glutamyl-tRNA(Gln) amidotransferase subunit A of Bifidobacterium longum (strain NCC 2705).